The following is a 379-amino-acid chain: Structure-specific endonuclease subunit EME2 (379 aa).

The tract at residues 1–55 (MARVGPGRAGVSCQGRGRGRGGSGQRRPPTWEISDSDAEDSAGSEAAARARDPAG) is disordered. Residues 50–266 (ARDPAGERRA…YPLKQYRESQ (217 aa)) form a nuclease-like domain; forms the post-nick DNA binding interface and is involved in DNA recognition and bending region. Residues 288–379 (GLQAAWRRQI…NPDLLLDLGS (92 aa)) are helix-hairpin-helix (2HhH); forms the pre-nick DNA binding interface and is involved in DNA recognition and bending.

It belongs to the EME1/MMS4 family. As to quaternary structure, part of the heterodimeric MUS81-EME2 complex; the complex forms specifically during the DNA replication phase of the cell cycle.

The protein localises to the nucleus. Functionally, non-catalytic subunit of the structure-specific, heterodimeric DNA endonuclease MUS81-EME2 which is involved in the maintenance of genome stability. In the complex, EME2 is required for DNA cleavage, participating in DNA recognition and bending. MUS81-EME2 cleaves 3'-flaps and nicked Holliday junctions, and exhibit limited endonuclease activity with 5' flaps and nicked double-stranded DNAs. MUS81-EME2 which is active during the replication of DNA is more specifically involved in replication fork processing. Replication forks frequently encounter obstacles to their passage, including DNA base lesions, DNA interstrand cross-links, difficult-to-replicate sequences, transcription bubbles, or tightly bound proteins. One mechanism for the restart of a stalled replication fork involves nucleolytic cleavage mediated by the MUS81-EME2 endonuclease. By acting upon the stalled fork, MUS81-EME2 generates a DNA double-strand break (DSB) that can be repaired by homologous recombination, leading to the restoration of an active fork. MUS81-EME2 could also function in telomere maintenance. The polypeptide is Structure-specific endonuclease subunit EME2 (Homo sapiens (Human)).